We begin with the raw amino-acid sequence, 1185 residues long: ELMO domain-containing protein F (1185 aa).

8 disordered regions span residues Gln-88–Asn-133, Ile-176–Glu-196, Asn-361–Glu-409, Lys-566–Ser-628, Glu-642–Gly-805, Leu-819–Ile-868, Asp-883–Thr-989, and Gln-1044–Leu-1114. Composition is skewed to low complexity over residues Ser-94 to Ile-127, Ile-176 to Thr-194, Asn-361 to Val-406, and Pro-587 to Ser-613. The region spanning Asp-275 to Lys-488 is the ELMO domain. Residues Ser-648–Ser-665 show a composition bias toward polar residues. Positions Ser-688–Glu-699 are enriched in low complexity. Positions Phe-721–Ile-732 are enriched in polar residues. Low complexity-rich tracts occupy residues Ser-733 to Ser-760 and Thr-767 to Thr-780. Polar residues predominate over residues Asp-781–Pro-790. Residues Lys-829–Lys-841 show a composition bias toward basic residues. Composition is skewed to low complexity over residues Asn-853–Ser-864, Ser-912–Gln-974, Asp-1053–Glu-1072, and Gly-1096–Ser-1109.

The protein is ELMO domain-containing protein F (elmoF) of Dictyostelium discoideum (Social amoeba).